The primary structure comprises 56 residues: Large ribosomal subunit protein bL33A (56 aa).

It belongs to the bacterial ribosomal protein bL33 family.

The protein is Large ribosomal subunit protein bL33A of Sorangium cellulosum (strain So ce56) (Polyangium cellulosum (strain So ce56)).